A 416-amino-acid polypeptide reads, in one-letter code: TNF receptor-associated factor 1 (416 aa).

The disordered stretch occupies residues 1 to 24; it reads MASSSGSSPRPAPDENEFPFGCPP. Ser-146 carries the phosphoserine modification. The stretch at 182–264 forms a coiled coil; the sequence is MKEKLLAELE…QSLRLMEEAS (83 aa). Glycyl lysine isopeptide (Lys-Gly) (interchain with G-Cter in ubiquitin) cross-links involve residues Lys-185 and Lys-193. The MATH domain maps to 266-412; it reads DGTFLWKITN…DDTMFLKCIV (147 aa).

As to quaternary structure, homotrimer. Heterotrimer with TRAF2. Interacts with TNFRSF1A/TNFR1, TNFRSF1B/TNFR2, TNFRSF4, TNFRSF5/CD40, TNFRSF8/CD30, TNFRSF9/CD137, TNFRSF11A/RANK, TNFRSF13C, TNFRSF18/AITR, TNFRSF17/BCMA, TNFRSF19/TROY, TNFRSF19L/RELT, XEDAR, EDAR, Epstein-Barr virus BNFL1/LMP-1, TANK/ITRAF, TRAIP and RIPK2. Interacts with BIRC2 and BIRC3 N-terminus; a single BIRC2 or BIRC3 molecule interacts with a heterotrimer formed by TRAF1 and TRAF2. Interacts with NFATC2IP, TRAFD1 and with HIVEP3. Interacts with MAP3K14. Interacts with GPS2. Polyubiquitinated by BIRC2 and/or BIRC3, leading to its subsequent proteasomal degradation. Ubiquitinated by the SCF(FBXL2) complex, leading to its degradation by the proteasome.

Functionally, adapter molecule that regulates the activation of NF-kappa-B and JNK. Plays a role in the regulation of cell survival and apoptosis. The heterotrimer formed by TRAF1 and TRAF2 is part of a E3 ubiquitin-protein ligase complex that promotes ubiquitination of target proteins, such as MAP3K14. The TRAF1/TRAF2 complex recruits the antiapoptotic E3 protein-ubiquitin ligases BIRC2 and BIRC3 to TNFRSF1B/TNFR2. This chain is TNF receptor-associated factor 1 (TRAF1), found in Homo sapiens (Human).